A 76-amino-acid polypeptide reads, in one-letter code: Small ribosomal subunit protein bS18 (76 aa).

The protein belongs to the bacterial ribosomal protein bS18 family. Part of the 30S ribosomal subunit. Forms a tight heterodimer with protein bS6.

Binds as a heterodimer with protein bS6 to the central domain of the 16S rRNA, where it helps stabilize the platform of the 30S subunit. This chain is Small ribosomal subunit protein bS18, found in Brevibacillus brevis (strain 47 / JCM 6285 / NBRC 100599).